Reading from the N-terminus, the 192-residue chain is uncharacterized protein (192 aa).

Residues 72 to 192 (GATVLLIVPP…SLVISEFSLV (121 aa)) enclose the B12-binding domain.

This is an uncharacterized protein from Rhodobacter capsulatus (Rhodopseudomonas capsulata).